Consider the following 2924-residue polypeptide: Zinc finger ZZ-type and EF-hand domain-containing protein 1 (2924 aa).

A disordered region spans residues 1-41; it reads MGNAPSNSSEDEAAAAGGEGWSPHQDWAADSGTTPGPGPAA. Residue Gly2 is the site of N-myristoyl glycine attachment. Low complexity predominate over residues 28–41; the sequence is AADSGTTPGPGPAA. The EF-hand domain maps to 111–146; that stretch reads CSGEQFEEAFAQFDAEGDGTVDAENMLEALKNSSGA. In terms of domain architecture, DOC spans 226 to 405; it reads LVQKEKESPG…AIWYWSLLTS (180 aa). Residue Ser240 is modified to Phosphoserine. Residues 1452–1470 are compositionally biased toward basic and acidic residues; it reads HLQPLDRRQRTSSVVEEHF. A disordered region spans residues 1452-1527; it reads HLQPLDRRQR…STPTRRPPFT (76 aa). Positions 1472–1485 are enriched in low complexity; sequence GSASPTEAATPAAG. Ser1475, Ser1488, and Ser1509 each carry phosphoserine. Thr1510 carries the post-translational modification Phosphothreonine. A compositionally biased stretch (pro residues) spans 1514–1523; that stretch reads PSPPSTPTRR. Residue Ser1515 is modified to Phosphoserine. Phosphothreonine occurs at positions 1519 and 1521. 2 positions are modified to phosphoserine: Ser1535 and Ser1538. ZZ-type zinc fingers lie at residues 1776-1831 and 1825-1880; these read NVDI…FTCD and NMEF…MVTI. Zn(2+)-binding residues include Cys1781, Cys1784, Cys1795, Cys1798, Cys1804, Cys1807, His1817, His1821, Cys1830, Cys1833, Cys1844, Cys1847, Cys1853, Cys1856, His1866, and His1870. The tract at residues 2388-2418 is disordered; it reads DLELDERGDQEEELDRPVSSPGEAEQKKLDP. Ser2407 is modified (phosphoserine). Lys2630 is modified (N6-acetyllysine).

As to quaternary structure, interacts with KLF6 and KLF9. Interacts via (ZZ-type 2 zinc finger) with histone H3 trimethylated at 'Lys-4' (H3K4me3) and histone H3 acetylated at 'Lys-4' (H3K4ac).

Its function is as follows. Histone H3 reader which may act as a transcriptional coactivator for KLF6 and KLF9 transcription factors. The chain is Zinc finger ZZ-type and EF-hand domain-containing protein 1 (Zzef1) from Mus musculus (Mouse).